The chain runs to 305 residues: UDP-N-acetylenolpyruvoylglucosamine reductase (305 aa).

Residues 22-190 enclose the FAD-binding PCMH-type domain; the sequence is KVGGAADFFA…LSARFRLQAG (169 aa). Arg169 is a catalytic residue. The active-site Proton donor is Ser220. The active site involves Glu290.

It belongs to the MurB family. The cofactor is FAD.

It is found in the cytoplasm. It carries out the reaction UDP-N-acetyl-alpha-D-muramate + NADP(+) = UDP-N-acetyl-3-O-(1-carboxyvinyl)-alpha-D-glucosamine + NADPH + H(+). The protein operates within cell wall biogenesis; peptidoglycan biosynthesis. Functionally, cell wall formation. This Synechococcus sp. (strain RCC307) protein is UDP-N-acetylenolpyruvoylglucosamine reductase.